The primary structure comprises 432 residues: FMRFamide peptide receptor frpr-18 (432 aa).

Residues M1–A8 are Extracellular-facing. The helical transmembrane segment at C9–F29 threads the bilayer. Residues S30–L42 are Cytoplasmic-facing. A helical transmembrane segment spans residues L43–I63. Residues P64–K84 are Extracellular-facing. A helical transmembrane segment spans residues L85–T105. Over L106–R128 the chain is Cytoplasmic. The helical transmembrane segment at N129 to Y149 threads the bilayer. Topologically, residues R150 to G176 are extracellular. Residues Y177–A197 traverse the membrane as a helical segment. Over N198–T225 the chain is Cytoplasmic. Residues T226–L246 traverse the membrane as a helical segment. Residues N247–D271 are Extracellular-facing. The helical transmembrane segment at L272 to S292 threads the bilayer. At E293–C432 the chain is on the cytoplasmic side. 2 disordered regions span residues I328–S349 and K388–E411.

This sequence belongs to the G-protein coupled receptor 1 family. In terms of tissue distribution, expressed in a subset of neurons in the head, midbody, and tail, including AIY, ASI, BAG, URA, CAN, I6, PVQ, DVA, RIM, and VC, and in the anal sphincter and intestinal muscles. Expression from the ASI neurons is involved in promoting arousal.

The protein resides in the cell membrane. Functionally, G-protein coupled receptor for flp-2 neuropeptides. May act through the G(q) alpha type of G proteins. Involved in mediating arousal from the sleep-like state called lethargus, which occurs during molting between larval and adult stages, in part by regulating touch sensitivity, and working in concert with neuropeptide pdf-1. In Caenorhabditis elegans, this protein is FMRFamide peptide receptor frpr-18.